The following is a 245-amino-acid chain: 1-(5-phosphoribosyl)-5-[(5-phosphoribosylamino)methylideneamino] imidazole-4-carboxamide isomerase (245 aa).

Asp7 acts as the Proton acceptor in catalysis. The active-site Proton donor is Asp129.

This sequence belongs to the HisA/HisF family.

Its subcellular location is the cytoplasm. The enzyme catalyses 1-(5-phospho-beta-D-ribosyl)-5-[(5-phospho-beta-D-ribosylamino)methylideneamino]imidazole-4-carboxamide = 5-[(5-phospho-1-deoxy-D-ribulos-1-ylimino)methylamino]-1-(5-phospho-beta-D-ribosyl)imidazole-4-carboxamide. The protein operates within amino-acid biosynthesis; L-histidine biosynthesis; L-histidine from 5-phospho-alpha-D-ribose 1-diphosphate: step 4/9. The sequence is that of 1-(5-phosphoribosyl)-5-[(5-phosphoribosylamino)methylideneamino] imidazole-4-carboxamide isomerase from Pectobacterium atrosepticum (strain SCRI 1043 / ATCC BAA-672) (Erwinia carotovora subsp. atroseptica).